Reading from the N-terminus, the 258-residue chain is Imidazole glycerol phosphate synthase subunit HisF (258 aa).

Active-site residues include D11 and D130.

This sequence belongs to the HisA/HisF family. In terms of assembly, heterodimer of HisH and HisF.

The protein localises to the cytoplasm. The catalysed reaction is 5-[(5-phospho-1-deoxy-D-ribulos-1-ylimino)methylamino]-1-(5-phospho-beta-D-ribosyl)imidazole-4-carboxamide + L-glutamine = D-erythro-1-(imidazol-4-yl)glycerol 3-phosphate + 5-amino-1-(5-phospho-beta-D-ribosyl)imidazole-4-carboxamide + L-glutamate + H(+). It participates in amino-acid biosynthesis; L-histidine biosynthesis; L-histidine from 5-phospho-alpha-D-ribose 1-diphosphate: step 5/9. IGPS catalyzes the conversion of PRFAR and glutamine to IGP, AICAR and glutamate. The HisF subunit catalyzes the cyclization activity that produces IGP and AICAR from PRFAR using the ammonia provided by the HisH subunit. The protein is Imidazole glycerol phosphate synthase subunit HisF of Yersinia pseudotuberculosis serotype O:3 (strain YPIII).